Here is a 480-residue protein sequence, read N- to C-terminus: Histone-lysine N-methyltransferase ASHR1 (480 aa).

The SET domain occupies 11–248; sequence RCLGVSNLPQ…KDSEITISYI (238 aa). Zn(2+) contacts are provided by Cys56, Cys59, Cys68, Cys71, Cys77, Cys81, His89, and Cys93. The MYND-type zinc-finger motif lies at 56–93; the sequence is CDGCFKTNNLKKCSACQVVWYCGSSCQKSEWKLHRDEC.

This sequence belongs to the class V-like SAM-binding methyltransferase superfamily. Histone-lysine methyltransferase family. SET2 subfamily.

The protein localises to the nucleus. The protein resides in the chromosome. The catalysed reaction is L-lysyl-[histone] + S-adenosyl-L-methionine = N(6)-methyl-L-lysyl-[histone] + S-adenosyl-L-homocysteine + H(+). Its function is as follows. Histone methyltransferase. The protein is Histone-lysine N-methyltransferase ASHR1 (ASHR1) of Arabidopsis thaliana (Mouse-ear cress).